We begin with the raw amino-acid sequence, 267 residues long: Urease accessory protein UreD 2 (267 aa).

Belongs to the UreD family. UreD, UreF and UreG form a complex that acts as a GTP-hydrolysis-dependent molecular chaperone, activating the urease apoprotein by helping to assemble the nickel containing metallocenter of UreC. The UreE protein probably delivers the nickel.

It localises to the cytoplasm. Its function is as follows. Required for maturation of urease via the functional incorporation of the urease nickel metallocenter. This Synechococcus sp. (strain JA-3-3Ab) (Cyanobacteria bacterium Yellowstone A-Prime) protein is Urease accessory protein UreD 2.